Reading from the N-terminus, the 514-residue chain is Putative thymidine phosphorylase (514 aa).

Belongs to the thymidine/pyrimidine-nucleoside phosphorylase family. Type 2 subfamily.

The enzyme catalyses thymidine + phosphate = 2-deoxy-alpha-D-ribose 1-phosphate + thymine. The polypeptide is Putative thymidine phosphorylase (Rhodopseudomonas palustris (strain ATCC BAA-98 / CGA009)).